The primary structure comprises 338 residues: 1-aminocyclopropane-1-carboxylate deaminase (338 aa).

The residue at position 51 (Lys51) is an N6-(pyridoxal phosphate)lysine. Ser78 acts as the Nucleophile in catalysis.

It belongs to the ACC deaminase/D-cysteine desulfhydrase family. As to quaternary structure, homotrimer. It depends on pyridoxal 5'-phosphate as a cofactor.

It catalyses the reaction 1-aminocyclopropane-1-carboxylate + H2O = 2-oxobutanoate + NH4(+). In terms of biological role, catalyzes a cyclopropane ring-opening reaction, the irreversible conversion of 1-aminocyclopropane-1-carboxylate (ACC) to ammonia and alpha-ketobutyrate. Allows growth on ACC as a nitrogen source. This is 1-aminocyclopropane-1-carboxylate deaminase from Acidovorax ebreus (strain TPSY) (Diaphorobacter sp. (strain TPSY)).